Reading from the N-terminus, the 250-residue chain is UPF0758 protein RPB_0700 (250 aa).

The disordered stretch occupies residues 1 to 27; that stretch reads MVDPISNAAPPMPADSSERLDPPGFAE. An MPN domain is found at 128-250; that stretch reads VLSSWSAVID…HASLKGLKLF (123 aa). Residues H199, H201, and D212 each coordinate Zn(2+). The JAMM motif motif lies at 199–212; that stretch reads HNHPSGDPTPSQAD.

It belongs to the UPF0758 family.

The sequence is that of UPF0758 protein RPB_0700 from Rhodopseudomonas palustris (strain HaA2).